The primary structure comprises 345 residues: Uroporphyrinogen decarboxylase (345 aa).

Substrate is bound by residues 27–31, F46, D76, Y152, S207, and H320; that span reads RQAGR.

The protein belongs to the uroporphyrinogen decarboxylase family. As to quaternary structure, homodimer.

It localises to the cytoplasm. It carries out the reaction uroporphyrinogen III + 4 H(+) = coproporphyrinogen III + 4 CO2. Its pathway is porphyrin-containing compound metabolism; protoporphyrin-IX biosynthesis; coproporphyrinogen-III from 5-aminolevulinate: step 4/4. Functionally, catalyzes the decarboxylation of four acetate groups of uroporphyrinogen-III to yield coproporphyrinogen-III. This Geobacillus sp. (strain WCH70) protein is Uroporphyrinogen decarboxylase.